Reading from the N-terminus, the 1423-residue chain is Histone-lysine N-methyltransferase ATXR7 (1423 aa).

The GYF domain maps to 263–312 (HACWFLVDGEGRNHGPHSILELFSWQQHGYVSDAALIRDGENKLRPITLA). Disordered stretches follow at residues 923 to 960 (CKDHEESLSNKPSQKVKKAHTSKLKRKNLSDARDEGTK), 1057 to 1097 (CSIS…SSTD), and 1115 to 1158 (LPCH…GRPK). A compositionally biased stretch (basic residues) spans 936–949 (QKVKKAHTSKLKRK). The segment covering 950–959 (NLSDARDEGT) has biased composition (basic and acidic residues). Positions 1057–1071 (CSISQKGRKSSQSSI) are enriched in polar residues. Composition is skewed to basic and acidic residues over residues 1115–1124 (LPCHTSDKLQ) and 1140–1157 (HTTERSPIKDLSVDDGRP). Positions 1266–1383 (KHLRFQQSKI…AGEEISYNYK (118 aa)) constitute an SET domain. Tyr1382 contacts S-adenosyl-L-methionine.

This sequence belongs to the class V-like SAM-binding methyltransferase superfamily. Histone-lysine methyltransferase family. TRX/MLL subfamily. As to expression, expressed in the shoot and root apices, vascular tissues and mesophyll cells of rosette leaves.

The protein resides in the nucleus. It catalyses the reaction L-lysyl(4)-[histone H3] + 3 S-adenosyl-L-methionine = N(6),N(6),N(6)-trimethyl-L-lysyl(4)-[histone H3] + 3 S-adenosyl-L-homocysteine + 3 H(+). The catalysed reaction is L-lysyl(36)-[histone H3] + 2 S-adenosyl-L-methionine = N(6),N(6)-dimethyl-L-lysyl(36)-[histone H3] + 2 S-adenosyl-L-homocysteine + 2 H(+). Its function is as follows. Histone methyltransferase involved in regulation of flowering time. Required for the expression of the flowering repressors FLC and MADS-box genes of the MAF family. Required for histone H3 dimethylation on 'Lys-36' H3K36me2 at the FLC locus. Required for histone H3 trimethylation on 'Lys-4' (H3K4me3) at the FLC locus. Prevents trimethylation on 'Lys-27' (H3K27me3) at the same locus. Involved in the control of seed dormancy and germination. In Arabidopsis thaliana (Mouse-ear cress), this protein is Histone-lysine N-methyltransferase ATXR7.